Reading from the N-terminus, the 247-residue chain is Reticulon-like protein B8 (247 aa).

A Reticulon domain is found at 61 to 247 (SADVLLWRNK…SGKFGLKKRE (187 aa)). Transmembrane regions (helical) follow at residues 71-91 (KISASVLMGATAIWVLFEWIN), 92-112 (FHFLSLVCYALLLGMIAQFVW), and 166-186 (FLMAVIGLWVAAMVGSCCNFL).

The protein localises to the endoplasmic reticulum membrane. The sequence is that of Reticulon-like protein B8 (RTNLB8) from Arabidopsis thaliana (Mouse-ear cress).